The sequence spans 75 residues: MPITSKYTDEQVEKILAEVGAVLEKHAASPELTLMIAGNIATNVLNQQVAASQRKVIAEKFAQALISSLEVPKAH.

Belongs to the UPF0352 family.

This Vibrio campbellii (strain ATCC BAA-1116) protein is UPF0352 protein VIBHAR_03027.